The primary structure comprises 1073 residues: Serine/threonine-protein phosphatase 6 regulatory ankyrin repeat subunit C (1073 aa).

ANK repeat units follow at residues 7-36, 40-69, 73-102, 106-135, 139-168, 172-201, 205-234, 238-267, 271-301, 305-334, 338-367, 371-400, 422-451, 455-484, 488-544, 548-578, 583-612, 616-645, 650-679, 686-715, 719-748, 752-781, 789-818, 821-851, 856-885, 889-919, 923-952, and 959-988; these read TDQP…NINV, ERRT…NVNA, VWLT…DVNA, YWQT…TVNV, TGRT…SLST, KDRQ…DVMC, KGYT…EIDE, FGNT…NVNQ, KGFT…DVNF, EGKS…EIDC, YGNT…DTAR, HDMF…LYSI, LGRT…DLRR, FGRT…SINE, KGCT…DPSL, QGYT…CLED, IPVS…NLDV, KGRT…SALV, RKWT…RADI, HGQT…TADA, RGRT…FVLC, KGRT…STDP, SGYS…FAYL, NPFT…KIVN, KGRT…EVDT, LGRT…NITV, NKNT…DLGL, and ALQM…TVLA.

In terms of assembly, protein phosphatase 6 (PP6) holoenzyme is proposed to be a heterotrimeric complex formed by the catalytic subunit, a SAPS domain-containing subunit (PP6R) and an ankyrin repeat-domain containing regulatory subunit (ARS).

Putative regulatory subunit of protein phosphatase 6 (PP6) that may be involved in the recognition of phosphoprotein substrates. This chain is Serine/threonine-protein phosphatase 6 regulatory ankyrin repeat subunit C (ANKRD52), found in Gallus gallus (Chicken).